A 1295-amino-acid chain; its full sequence is Phosphoribosylformylglycinamidine synthase (1295 aa).

A disordered region spans residues 305–327 (WPGAATGSGGEIRDEGATGRGAK). ATP contacts are provided by residues 307 to 318 (GAATGSGGEIRD), 386 to 388 (TGY), and Ala678. Mg(2+) contacts are provided by Asp679, Glu718, Asn722, and Asp884. Ser886 is a binding site for ATP. The region spanning 1041-1295 (KVAVLREQGG…IFRNARKQLG (255 aa)) is the Glutamine amidotransferase type-1 domain. Catalysis depends on Cys1135, which acts as the Nucleophile. Active-site residues include His1260 and Glu1262.

This sequence in the N-terminal section; belongs to the FGAMS family. Monomer.

It localises to the cytoplasm. It catalyses the reaction N(2)-formyl-N(1)-(5-phospho-beta-D-ribosyl)glycinamide + L-glutamine + ATP + H2O = 2-formamido-N(1)-(5-O-phospho-beta-D-ribosyl)acetamidine + L-glutamate + ADP + phosphate + H(+). It participates in purine metabolism; IMP biosynthesis via de novo pathway; 5-amino-1-(5-phospho-D-ribosyl)imidazole from N(2)-formyl-N(1)-(5-phospho-D-ribosyl)glycinamide: step 1/2. Functionally, phosphoribosylformylglycinamidine synthase involved in the purines biosynthetic pathway. Catalyzes the ATP-dependent conversion of formylglycinamide ribonucleotide (FGAR) and glutamine to yield formylglycinamidine ribonucleotide (FGAM) and glutamate. In Salmonella choleraesuis (strain SC-B67), this protein is Phosphoribosylformylglycinamidine synthase.